Here is a 613-residue protein sequence, read N- to C-terminus: Proton myo-inositol cotransporter hmit-1.2 (613 aa).

The Cytoplasmic portion of the chain corresponds to 1–21; it reads MVAVEFKVSESGRPRPEKNPK. The chain crosses the membrane as a helical span at residues 22–42; the sequence is LGFFVYLLGSAAIIGGFLFGY. Residues 43–69 are Extracellular-facing; the sequence is DTSVVSAAMLYVPEAPGLKPMGTVWKE. The chain crosses the membrane as a helical span at residues 70–90; it reads VIVSITPGMAAVGAWFSGAGS. Residues 91–96 are Cytoplasmic-facing; it reads DRYGRK. Residues 97 to 117 form a helical membrane-spanning segment; the sequence is PIIIGSTLIFVCGAVICAVAW. Over 118 to 119 the chain is Extracellular; sequence TK. The helical transmembrane segment at 120-140 threads the bilayer; the sequence is IVMLIGRIFLGVGIGFASMVV. Residues 141–157 are Cytoplasmic-facing; the sequence is PVYLGEASPTHVRGTLV. A helical transmembrane segment spans residues 158 to 178; the sequence is SAFAMMISFGQVVANIMGGVF. Residues 179-189 lie on the Extracellular side of the membrane; that stretch reads SYWEPYTIGWR. Residues 190–210 traverse the membrane as a helical segment; it reads LMFAFAGIPALIQFVCFIFLP. Over 211-279 the chain is Cytoplasmic; it reads ETPRWLYENG…RILKTPHVLK (69 aa). Residues 280-300 form a helical membrane-spanning segment; it reads ACFIGSMLQAFQQLAGINTIL. Residues 301–317 are Extracellular-facing; it reads YYTADIIRSAGIENYHT. A helical membrane pass occupies residues 318 to 338; the sequence is IIWISVILSICNLIGPFAPMF. Residues 339–347 are Cytoplasmic-facing; the sequence is FIEKLGRRK. A helical membrane pass occupies residues 348 to 368; the sequence is LFLFSCAGVVVSLVLIGVSFL. Topologically, residues 369-472 are extracellular; sequence LVGNDSAPNF…QKHHCTTSYT (104 aa). Residues N372, N451, and N456 are each glycosylated (N-linked (GlcNAc...) asparagine). A helical membrane pass occupies residues 473-493; that stretch reads ILPIVMMGVYLLTFSCGFTSL. At 494 to 515 the chain is on the cytoplasmic side; it reads PWVLNSEFYPMWARSTCVSIST. A helical transmembrane segment spans residues 516–536; that stretch reads LSNWVFNLIIALTYLSLTHAI. Over 537-539 the chain is Extracellular; it reads TKY. A helical transmembrane segment spans residues 540-560; it reads GAFWLYAIFTIIAFIFIYFLV. Topologically, residues 561–613 are cytoplasmic; sequence PETTGYSIDEVEMLFMNKRQRNIAMQARQAKLDAASDKDKNSSTSLSTETITM. Residues 594–613 form a disordered region; sequence AASDKDKNSSTSLSTETITM. The segment covering 602 to 613 has biased composition (polar residues); that stretch reads SSTSLSTETITM.

This sequence belongs to the major facilitator superfamily. Sugar transporter (TC 2.A.1.1) family. In terms of tissue distribution, expressed in the excretory canal cell and in pairs of amphid and sheath glia.

The protein resides in the cell membrane. It is found in the perikaryon. The enzyme catalyses myo-inositol(out) + H(+)(out) = myo-inositol(in) + H(+)(in). In terms of biological role, h(+)-myo-inositol cotransporter. Probably by promoting the transport of myo-inositol regulates intracellular osmosis in response to hyperosmotic stress. The sequence is that of Proton myo-inositol cotransporter hmit-1.2 from Caenorhabditis elegans.